A 1392-amino-acid chain; its full sequence is L-2-aminoadipate reductase (1392 aa).

Residue lysine 541 forms a Glycyl lysine isopeptide (Lys-Gly) (interchain with G-Cter in ubiquitin) linkage. The 78-residue stretch at 843-920 (SQFTNVEREV…AFAAEIDRIK (78 aa)) folds into the Carrier domain. At serine 880 the chain carries O-(pantetheine 4'-phosphoryl)serine. Lysine 1276 participates in a covalent cross-link: Glycyl lysine isopeptide (Lys-Gly) (interchain with G-Cter in ubiquitin).

The protein belongs to the ATP-dependent AMP-binding enzyme family. Pantetheine 4'-phosphate serves as cofactor.

The enzyme catalyses (S)-2-amino-6-oxohexanoate + NADP(+) + H2O = L-2-aminoadipate + NADPH + 2 H(+). It catalyses the reaction (S)-2-amino-6-oxohexanoate + NAD(+) + H2O = L-2-aminoadipate + NADH + 2 H(+). It carries out the reaction (S)-2-amino-6-oxohexanoate + AMP + diphosphate + NADP(+) = L-2-aminoadipate + ATP + NADPH + H(+). It functions in the pathway amino-acid biosynthesis; L-lysine biosynthesis via AAA pathway; L-lysine from L-alpha-aminoadipate (fungal route): step 1/3. Its function is as follows. Catalyzes the activation of alpha-aminoadipate by ATP-dependent adenylation and the reduction of activated alpha-aminoadipate by NADPH. The activated alpha-aminoadipate is bound to the phosphopantheinyl group of the enzyme itself before it is reduced to (S)-2-amino-6-oxohexanoate. The chain is L-2-aminoadipate reductase (LYS2) from Saccharomyces cerevisiae (strain ATCC 204508 / S288c) (Baker's yeast).